A 387-amino-acid chain; its full sequence is Succinate--CoA ligase [ADP-forming] subunit beta (387 aa).

Positions Lys-9–Lys-245 constitute an ATP-grasp domain. Residues Lys-46, Gly-53–Gly-55, Glu-100, Tyr-103, and Glu-108 each bind ATP. Mg(2+) contacts are provided by Asn-200 and Asp-214. Substrate is bound by residues Asn-265 and Gly-322–Val-324.

It belongs to the succinate/malate CoA ligase beta subunit family. Heterotetramer of two alpha and two beta subunits. It depends on Mg(2+) as a cofactor.

It catalyses the reaction succinate + ATP + CoA = succinyl-CoA + ADP + phosphate. The catalysed reaction is GTP + succinate + CoA = succinyl-CoA + GDP + phosphate. The protein operates within carbohydrate metabolism; tricarboxylic acid cycle; succinate from succinyl-CoA (ligase route): step 1/1. In terms of biological role, succinyl-CoA synthetase functions in the citric acid cycle (TCA), coupling the hydrolysis of succinyl-CoA to the synthesis of either ATP or GTP and thus represents the only step of substrate-level phosphorylation in the TCA. The beta subunit provides nucleotide specificity of the enzyme and binds the substrate succinate, while the binding sites for coenzyme A and phosphate are found in the alpha subunit. In Francisella tularensis subsp. mediasiatica (strain FSC147), this protein is Succinate--CoA ligase [ADP-forming] subunit beta.